Reading from the N-terminus, the 71-residue chain is Conotoxin Bu23 (71 aa).

A signal peptide spans 1–21 (MGMRMMVTVFLLGVLATTVVS). Residues 22–37 (LRSNRASDGRRGIVNK) constitute a propeptide that is removed on maturation. Asn-70 bears the Asparagine amide mark.

Belongs to the conotoxin A superfamily. Post-translationally, contains 3 disulfide bonds. They are not indicated here, since framework IV presents two different connectivities (I-V, II-III, IV-VI and I-III, II-V, IV-VI). In terms of tissue distribution, expressed by the venom duct.

It localises to the secreted. The chain is Conotoxin Bu23 from Conus bullatus (Bubble cone).